A 657-amino-acid polypeptide reads, in one-letter code: Translation factor GUF1, mitochondrial (657 aa).

The transit peptide at 1 to 21 (MLKTLGLRSLCPSLGGRGFRR) directs the protein to the mitochondrion. A tr-type G domain is found at 56 to 240 (ENYRNFSIVA…TIVDRIPPPT (185 aa)). GTP is bound by residues 65–72 (AHVDHGKS), 132–136 (DTPGH), and 186–189 (NKID).

The protein belongs to the TRAFAC class translation factor GTPase superfamily. Classic translation factor GTPase family. LepA subfamily.

It is found in the mitochondrion inner membrane. The enzyme catalyses GTP + H2O = GDP + phosphate + H(+). Functionally, promotes mitochondrial protein synthesis. May act as a fidelity factor of the translation reaction, by catalyzing a one-codon backward translocation of tRNAs on improperly translocated ribosomes. Binds to mitochondrial ribosomes in a GTP-dependent manner. This chain is Translation factor GUF1, mitochondrial, found in Candida glabrata (strain ATCC 2001 / BCRC 20586 / JCM 3761 / NBRC 0622 / NRRL Y-65 / CBS 138) (Yeast).